Consider the following 489-residue polypeptide: NADH-quinone oxidoreductase subunit N (489 aa).

The next 14 membrane-spanning stretches (helical) occupy residues 15 to 35 (APLL…VFFI), 44 to 64 (GYLA…LWGV), 78 to 98 (FALT…TMSL), 106 to 126 (IEQG…ILLA), 131 to 151 (LIVL…LTGF), 166 to 186 (LVLG…IFGA), 209 to 229 (LTLL…KVAL), 244 to 264 (PTPV…AALV), 278 to 298 (WLPV…LGAV), 306 to 326 (MLAY…MVAG), 333 to 353 (AFLF…AVLI), 378 to 398 (LAVA…MAGF), 412 to 432 (GLPW…FFYL), and 459 to 479 (IALA…VFAL).

This sequence belongs to the complex I subunit 2 family. NDH-1 is composed of 14 different subunits. Subunits NuoA, H, J, K, L, M, N constitute the membrane sector of the complex.

The protein localises to the cell membrane. It catalyses the reaction a quinone + NADH + 5 H(+)(in) = a quinol + NAD(+) + 4 H(+)(out). In terms of biological role, NDH-1 shuttles electrons from NADH, via FMN and iron-sulfur (Fe-S) centers, to quinones in the respiratory chain. The immediate electron acceptor for the enzyme in this species is believed to be ubiquinone. Couples the redox reaction to proton translocation (for every two electrons transferred, four hydrogen ions are translocated across the cytoplasmic membrane), and thus conserves the redox energy in a proton gradient. This chain is NADH-quinone oxidoreductase subunit N, found in Chloroflexus aggregans (strain MD-66 / DSM 9485).